The sequence spans 447 residues: MASSLSTKPFLSGSRRRSTTDGSGWSYFQTSDLRQLSNQSVQISVRRQTAPLKLVVQASGSSFGKVFQVTTYGESHGGGVGCVIDGCPPRFPISEADIQSDLDRRRPGQSRITTPRKETDTCKIYSGVADGFTTGSPIHISVPNTDQRGNDYSEMAKAYRPSHADATYDFKYGVRSVQGGGRSSARETIGRVAAGALAKKILKAYAGTEVLAYVSQAHKVVLPEGLVDHETLSLEQIESNIVRCPDSEYAEKMIAAIDAVRVKGDSVGGVVTCIMRNVPRGLGSPVFDKLEAELAKACMSLPATKGFEFGSGFSGTFLTGSEHNDEFYTDENGRIRTRTNRSGGIQGGISNGEIINMRIAFKPTSTIGKKQNTVTREREEIELIARGRHDPCVVPRAVPMVEAMVALVLLDQLMLQHAQGNLFSINPALQEPLSETVSSAAASLQGV.

Residues 1–24 (MASSLSTKPFLSGSRRRSTTDGSG) form a disordered region. Residues 1–57 (MASSLSTKPFLSGSRRRSTTDGSGWSYFQTSDLRQLSNQSVQISVRRQTAPLKLVVQ) constitute a chloroplast transit peptide.

It belongs to the chorismate synthase family. In terms of assembly, homotetramer. It depends on FMNH2 as a cofactor. The N-terminus is blocked.

It localises to the plastid. The protein resides in the chloroplast. The catalysed reaction is 5-O-(1-carboxyvinyl)-3-phosphoshikimate = chorismate + phosphate. It participates in metabolic intermediate biosynthesis; chorismate biosynthesis; chorismate from D-erythrose 4-phosphate and phosphoenolpyruvate: step 7/7. Functionally, catalyzes the last common step of the biosynthesis of aromatic amino acids, produced via the shikimic acid pathway. The sequence is that of Chorismate synthase, chloroplastic from Capnoides sempervirens (Rock-harlequin).